The chain runs to 230 residues: Protein FAM3A (230 aa).

Residues 1-33 (MRLAGPLRIVALVVSVGLTWIVVSILLGGPGSG) form the signal peptide. 2 disulfide bridges follow: Cys-59-Cys-87 and Cys-65-Cys-222. In terms of domain architecture, GG-type lectin spans 68–226 (EHLAFRVVSG…LEMEGCIPRR (159 aa)).

This sequence belongs to the FAM3 family.

It localises to the secreted. This Pongo abelii (Sumatran orangutan) protein is Protein FAM3A (FAM3A).